The sequence spans 488 residues: Ammonium transporter 1 member 1 (488 aa).

11 helical membrane-spanning segments follow: residues 47–69 (TYLL…LLAG), 90–109 (LFYY…NGFI), 129–148 (FLYQ…GSIA), 153–175 (FVAY…SHWF), 195–217 (VIDF…YGAL), 238–257 (HSAS…WYGF), 281–303 (AVGR…TLFG), 316–333 (VCNG…GCSV), 337–356 (WAAI…FNML), 368–387 (AAQL…GLFA), and 418–440 (HIIQ…FYIL).

The protein belongs to the ammonia transporter channel (TC 1.A.11.2) family. As to expression, root hairs and leaves.

Its subcellular location is the membrane. Functionally, ammonium transporter that may be involved in ammonium uptake from the soil. This chain is Ammonium transporter 1 member 1 (AMT1-1), found in Solanum lycopersicum (Tomato).